Reading from the N-terminus, the 517-residue chain is DNA-binding protein (517 aa).

The segment covering 1-10 (MASRGGNQSS) has biased composition (polar residues). The tract at residues 1-110 (MASRGGNQSS…DISQDSEEER (110 aa)) is disordered. A compositionally biased stretch (low complexity) spans 64–80 (VLVSETSRSSLSPERSN). Positions 87–96 (PKKKPRKTKH) are enriched in basic residues. Position 180 is a phosphotyrosine; by host (Tyr180). Zn(2+) contacts are provided by Cys269 and His271. The segment at 282–316 (IEMDVASENGQRAMKENPDRAKITQNRWGRNVVQL) is flexible loop. Zn(2+) contacts are provided by Cys324, Cys340, Cys382, Cys384, Cys436, and Cys453. Positions 501-517 (VSLPAGHYDSRQNPFDF) are C-terminal arm, DBP binding.

The protein belongs to the adenoviridae E2A DNA-binding protein family. Homomultimerizes on viral ssDNA bound to pTP. Forms a initiation complex with viral polymerase, pTP and hosts NFIA and POU2F1/OCT1. Interacts with host SRCAP.

Its subcellular location is the host nucleus. Its function is as follows. Plays a role in the elongation phase of viral strand displacement replication by unwinding the template in an ATP-independent fashion, employing its capacity to form multimers. Also enhances the rate of initiation. Released from template upon second strand synthesis. Assembles in complex with viral pTP, viral pol, host NFIA and host POU2F1/OCT1 on viral origin of replication. Covers the whole ssDNA genome during synthesis. The complementary strand synthesis induces its relese from DNA template. May inhibit cellular transcription mediated by the interaction between host SRCAP and CBP. In Human adenovirus B serotype 7 (HAdV-7), this protein is DNA-binding protein.